Consider the following 654-residue polypeptide: MGQELSQHELYVEQLKKALKTRGVKVKGNDLLKFFDFVKDTCPWFPQEGTIDIKRWRRVGDCFQDYYNTFGPEKIPVTAFSYWNLIKDLIDKKEADPQVMAAVTQTEKILKVSSQTDLRDNSHNKDMDLISLESDDEEAKAPSEKMTMSNKSPKKYPAMLASQNNNTDKDPDLSEVDWDGLEDEAAKYHNPDWPPFLSRPPPYNRTAATAPAVMAVVNPKEELKEKISQLEEQIKLEELHQSLIIRLQKLKTGNERVTSSGNIESHSRTPKWPGQCLPKGKYLINKNTEEYPPKDIFPVTETMDGQGQAWRHHNGFDFTVIKELKTAVSQYGATAPYTLAIVESIADNWLTPTDWNTLVRAVLSGGDHLIWKSEFFENCRDTAKRNQQAGNGWDFDMLTGSGNYANTDAQMQYDPGLFAQIQAAATNAWRKLPVKGDPGASLTGVKQGPDEPFADFVHRLITTAGRIFGNAEAGVDYVKQLAYENANPACQAAIRPYRKKTDLTGYIRLCSDIGPSYQQGLAMAAAFSGQTVKDLLNNKNKDRGGCFKCGKKGHFAKDCRDHSNKNPESKVPGLCPRCKRGKHWANECKSKTDSQGNPLPPHQGNGMRGQPQAPKQAYGAVSFVPANSNNPFQNLIEPPQEVQDWTSVPPPTQY.

G2 carries the N-myristoyl glycine; by host lipid modification. Positions 101–152 are excised as a propeptide; the sequence is AAVTQTEKILKVSSQTDLRDNSHNKDMDLISLESDDEEAKAPSEKMTMSNKS. The segment at 132 to 152 is disordered; the sequence is LESDDEEAKAPSEKMTMSNKS. A PPXY motif motif is present at residues 200–203; that stretch reads PPPY. Positions 215-251 form a coiled coil; sequence AVVNPKEELKEKISQLEEQIKLEELHQSLIIRLQKLK. 2 CCHC-type zinc fingers span residues 544-561 and 573-590; these read GGCF…DCRD and GLCP…ECKS. The segment at 588–654 is disordered; sequence CKSKTDSQGN…WTSVPPPTQY (67 aa).

Myristoylated. Myristoylation of the matrix (MA) domain mediates the transport and binding of Gag polyproteins to the host plasma membrane and is required for the assembly of viral particles. In terms of processing, specific enzymatic cleavages in vivo yield mature proteins.

Its subcellular location is the virion. Matrix protein. In terms of biological role, nucleocapsid protein. Functionally, capsid protein. In Simian retrovirus SRV-2, this protein is Gag polyprotein (gag).